The primary structure comprises 357 residues: Ubiquitin carboxyl-terminal hydrolase 2 (357 aa).

Residues 19 to 351 (TGLRNLGNTC…DAYLLFYELA (333 aa)) enclose the USP domain. C28 acts as the Nucleophile in catalysis. Zn(2+) is bound by residues C177, C180, C228, and C231. Catalysis depends on H309, which acts as the Proton acceptor.

This sequence belongs to the peptidase C19 family. USP2 subfamily. In terms of assembly, homooligomer.

It is found in the cytoplasm. The protein resides in the perinuclear region. The catalysed reaction is Thiol-dependent hydrolysis of ester, thioester, amide, peptide and isopeptide bonds formed by the C-terminal Gly of ubiquitin (a 76-residue protein attached to proteins as an intracellular targeting signal).. Hydrolase that deubiquitinates polyubiquitinated target proteins such as MDM2, MDM4 and CCND1. Possesses both ubiquitin-specific peptidase and isopeptidase activities. May play a role in the regulation of the circadian clock. The chain is Ubiquitin carboxyl-terminal hydrolase 2 (USP2) from Gallus gallus (Chicken).